Reading from the N-terminus, the 469-residue chain is Serine hydroxymethyltransferase, cytosolic (469 aa).

Lysine 248 bears the N6-(pyridoxal phosphate)lysine mark.

Belongs to the SHMT family. In terms of assembly, homotetramer. The cofactor is pyridoxal 5'-phosphate.

It is found in the cytoplasm. The enzyme catalyses (6R)-5,10-methylene-5,6,7,8-tetrahydrofolate + glycine + H2O = (6S)-5,6,7,8-tetrahydrofolate + L-serine. It participates in one-carbon metabolism; tetrahydrofolate interconversion. Functionally, interconversion of serine and glycine. This chain is Serine hydroxymethyltransferase, cytosolic (SHM2), found in Candida glabrata (strain ATCC 2001 / BCRC 20586 / JCM 3761 / NBRC 0622 / NRRL Y-65 / CBS 138) (Yeast).